An 87-amino-acid polypeptide reads, in one-letter code: MARVTVEDCLEHVDNRFELVMLSTKRARQLATGGKEPKVAWENDKPTVVALREIAEGLIDYAAIAEAEIVEDEPLFAAFEDESNEAV.

The protein belongs to the RNA polymerase subunit omega family. The RNAP catalytic core consists of 2 alpha, 1 beta, 1 beta' and 1 omega subunit. When a sigma factor is associated with the core the holoenzyme is formed, which can initiate transcription.

The catalysed reaction is RNA(n) + a ribonucleoside 5'-triphosphate = RNA(n+1) + diphosphate. In terms of biological role, promotes RNA polymerase assembly. Latches the N- and C-terminal regions of the beta' subunit thereby facilitating its interaction with the beta and alpha subunits. This Pseudomonas fluorescens (strain ATCC BAA-477 / NRRL B-23932 / Pf-5) protein is DNA-directed RNA polymerase subunit omega.